The following is a 79-amino-acid chain: Cell division protein ZapB (79 aa).

A coiled-coil region spans residues 4–78 (EVFEKLEAKV…LQALLGKMEE (75 aa)).

The protein belongs to the ZapB family. In terms of assembly, homodimer. The ends of the coiled-coil dimer bind to each other, forming polymers. Interacts with FtsZ.

It localises to the cytoplasm. Functionally, non-essential, abundant cell division factor that is required for proper Z-ring formation. It is recruited early to the divisome by direct interaction with FtsZ, stimulating Z-ring assembly and thereby promoting cell division earlier in the cell cycle. Its recruitment to the Z-ring requires functional FtsA or ZipA. This is Cell division protein ZapB from Cronobacter sakazakii (strain ATCC BAA-894) (Enterobacter sakazakii).